The following is a 508-amino-acid chain: Lysine--tRNA ligase (508 aa).

Mg(2+)-binding residues include Glu418 and Glu425.

This sequence belongs to the class-II aminoacyl-tRNA synthetase family. Homodimer. Mg(2+) serves as cofactor.

It localises to the cytoplasm. It catalyses the reaction tRNA(Lys) + L-lysine + ATP = L-lysyl-tRNA(Lys) + AMP + diphosphate. The chain is Lysine--tRNA ligase from Burkholderia vietnamiensis (strain G4 / LMG 22486) (Burkholderia cepacia (strain R1808)).